The following is a 308-amino-acid chain: Mitochondrial import receptor subunit TOM40B (308 aa).

A disordered region spans residues 1–29 (MGNTLGLAPMGALPRRSPRREEPLPNPGS). The interval 281 to 308 (PLPVTLALGAFLNHWRNRFHCGFSITVG) is required for mitochondrial targeting.

This sequence belongs to the Tom40 family. As to quaternary structure, forms part of the preprotein translocase of the outer mitochondrial membrane (TOM complex) containing TOMM22, TOMM40, TOMM40L and TOMM70. Interacts with mitochondrial targeting sequences.

The protein resides in the mitochondrion outer membrane. In terms of biological role, potential channel-forming protein implicated in import of protein precursors into mitochondria. The polypeptide is Mitochondrial import receptor subunit TOM40B (Bos taurus (Bovine)).